The sequence spans 505 residues: Calcium/calmodulin-dependent protein kinase kinase 1 (505 aa).

Residues 27-66 (HLEEAEEGPEPASNGVDPPPRARAASVIPGSASRPTPVRP) form a disordered region. A phosphoserine mark is found at Ser-67 and Ser-74. At Arg-78 the chain carries Asymmetric dimethylarginine. Phosphoserine is present on Ser-100. Thr-108 carries the post-translational modification Phosphothreonine. One can recognise a Protein kinase domain in the interval 128 to 409 (YKLQSEIGKG…VSDIKLHPWV (282 aa)). ATP-binding positions include 134–142 (IGKGAYGVV) and Lys-157. The RP domain stretch occupies residues 167–189 (QYGFPRRPPPRGSQAPQGGPAKQ). Asp-275 acts as the Proton acceptor in catalysis. Residues 435–440 (KNSVKL) are autoinhibitory domain. The segment at 438–463 (VKLIPSWTTVILVKSMLRKRSFGNPF) is calmodulin-binding. A phosphoserine mark is found at Ser-458, Ser-475, and Ser-492. Residues 460-505 (GNPFEPQARREERSMSAPGNLLLKEGCGEGGKSPELPGVQEDEAAS) form a disordered region.

The protein belongs to the protein kinase superfamily. Ser/Thr protein kinase family. As to quaternary structure, interacts with CAMK4 and calmodulin. Appears to be autophosphorylated. Phosphorylated at multiple sites by PRCAKA/PKA. Phosphorylation of Ser-458 is blocked upon binding to Ca(2+)/calmodulin. May be phosphorylated by CAMK1 and CAMK4. As to expression, mostly expressed in the brain with higher levels in cortex and hippocampus. Lower expression levels were detected in striatum, nucleus accumbens and cerebellum (at protein level). Abundant in forebrain, weaker in cerebellum and also detected in thymus and spleen.

Its subcellular location is the cytoplasm. The protein localises to the nucleus. The catalysed reaction is L-seryl-[protein] + ATP = O-phospho-L-seryl-[protein] + ADP + H(+). It carries out the reaction L-threonyl-[protein] + ATP = O-phospho-L-threonyl-[protein] + ADP + H(+). Its activity is regulated as follows. Activated by Ca(2+)/calmodulin. Binding of calmodulin may relieve intrasteric autoinhibition. Partially inhibited upon phosphorylation by PRCAKA/PKA. May be regulated through phosphorylation by CAMK1 and CAMK4. Its function is as follows. Calcium/calmodulin-dependent protein kinase that belongs to a proposed calcium-triggered signaling cascade involved in a number of cellular processes. Phosphorylates CAMK1, CAMK1D, CAMK1G and CAMK4. Involved in regulating cell apoptosis. Promotes cell survival by phosphorylating AKT1/PKB that inhibits pro-apoptotic BAD/Bcl2-antagonist of cell death. The polypeptide is Calcium/calmodulin-dependent protein kinase kinase 1 (Camkk1) (Rattus norvegicus (Rat)).